A 263-amino-acid chain; its full sequence is Regulatory protein RecX (263 aa).

Belongs to the RecX family.

It is found in the cytoplasm. Its function is as follows. Modulates RecA activity. This chain is Regulatory protein RecX, found in Bacillus velezensis (strain DSM 23117 / BGSC 10A6 / LMG 26770 / FZB42) (Bacillus amyloliquefaciens subsp. plantarum).